Here is a 502-residue protein sequence, read N- to C-terminus: MSGLAIDMTGISKAFGPVKALVDADLRVARGTIHGLVGQNGAGKSTIIKVLAGILKPDSGRITINGTRVESLTPASVERLGVHFIHQERLLVPTATVAEAVFLNYELRFGPFLRPGAMKRRAEELIRTHFGLELPGDTLVRDLTTAQQKIVQITRALAQEAQVLVLDEPTAALVKREVDSLFAVLRNLRAQGIAVIFISHYMQEIEDLCDEVTVMRNGTDVGVVRPGETSIDEIVSMMIARDVGEMFPCRSHALGAPVLRVEGLSQAGHFRNVSFEVRAGEVLGITGLLGSGVKELVECLFGLEQPDAGSVTIDGEVRRFANPGRAVQGRVALVPEDRRAHGVATDMSVRDNITIASLERYMTRGFVSRARENEAVDGFIRELSIKTPHRDQLVRNLSGGNQQKVALAKWLSCQSRVYVLDEPTVAVDVGAKVEIYTLLNRLAAEGAAILFLSSDLLEIAGFCDRALVVYRGTLNGEFAGETLDSDLLLAAASGARAQRKEA.

ABC transporter domains lie at 6–242 (IDMT…IARD) and 253–496 (ALGA…SGAR). 38–45 (GQNGAGKS) is a binding site for ATP.

It belongs to the ABC transporter superfamily. Ribose importer (TC 3.A.1.2.1) family. As to quaternary structure, the complex is composed of an ATP-binding protein (RbsA), two transmembrane proteins (RbsC) and a solute-binding protein (RbsB).

The protein resides in the cell inner membrane. It catalyses the reaction D-ribose(out) + ATP + H2O = D-ribose(in) + ADP + phosphate + H(+). In terms of biological role, part of the ABC transporter complex RbsABC involved in ribose import. Responsible for energy coupling to the transport system. The protein is Ribose import ATP-binding protein RbsA of Cereibacter sphaeroides (strain ATCC 17023 / DSM 158 / JCM 6121 / CCUG 31486 / LMG 2827 / NBRC 12203 / NCIMB 8253 / ATH 2.4.1.) (Rhodobacter sphaeroides).